Here is a 525-residue protein sequence, read N- to C-terminus: GMP synthase [glutamine-hydrolyzing] (525 aa).

A Glutamine amidotransferase type-1 domain is found at 9-207 (RILILDFGSQ…VRDICQCEAL (199 aa)). C86 acts as the Nucleophile in catalysis. Catalysis depends on residues H181 and E183. Positions 208 to 400 (WTPAKIIDDA…LGLPYDMLYR (193 aa)) constitute a GMPS ATP-PPase domain. 235 to 241 (SGGVDSS) provides a ligand contact to ATP.

In terms of assembly, homodimer.

The catalysed reaction is XMP + L-glutamine + ATP + H2O = GMP + L-glutamate + AMP + diphosphate + 2 H(+). The protein operates within purine metabolism; GMP biosynthesis; GMP from XMP (L-Gln route): step 1/1. Its function is as follows. Catalyzes the synthesis of GMP from XMP. The sequence is that of GMP synthase [glutamine-hydrolyzing] from Salmonella newport (strain SL254).